An 880-amino-acid chain; its full sequence is DNA mismatch repair protein MutS (880 aa).

624 to 631 (GPNMAGKS) provides a ligand contact to ATP.

It belongs to the DNA mismatch repair MutS family.

Functionally, this protein is involved in the repair of mismatches in DNA. It is possible that it carries out the mismatch recognition step. This protein has a weak ATPase activity. The polypeptide is DNA mismatch repair protein MutS (Alkaliphilus metalliredigens (strain QYMF)).